A 501-amino-acid chain; its full sequence is L-aspartate decarboxylase dtxS4 (501 aa).

Residue 106-108 coordinates substrate; the sequence is KLT. N6-(pyridoxal phosphate)lysine is present on lysine 320. Arginine 474 is a substrate binding site.

It belongs to the group II decarboxylase family. It depends on pyridoxal 5'-phosphate as a cofactor.

The enzyme catalyses L-aspartate + H(+) = beta-alanine + CO2. Its pathway is secondary metabolite biosynthesis. In terms of biological role, L-aspartate decarboxylase; part of the gene cluster that mediates the biosynthesis of destruxins, insecticidal cyclic hexadepsipeptides which induce flaccid paralysis and visceral muscle contraction in insects through targeting the calcium channels and vacuolar-type ATPases. The aldo-keto reductase dtxS3 converts alpha-ketoisocaproic acid from deaminated leucine into alpha-hydroxyisocaproic acid (HIC), which is the first substrate for destruxin assembly by dtxS1. L-aspartate decarboxylase dtxS4 converts aspartic acid into beta-alanine, the last substrate for the destruxin assembly line performed by dtxS1. The nonribosomal peptide synthetase dtxS1 synthesizes destruxins B and B2, whereas the cytochrome P450 monooxygenase dtxS2 is required to convert destruxin B into other destruxin derivatives, including destructins C, D, A and E. Destruxin E-diol (ED) is further produced in a non-enzymatic manner from destruxin E. Destruxins play an important role in virulence and escape from insect host immune defenses. The chain is L-aspartate decarboxylase dtxS4 from Metarhizium robertsii (strain ARSEF 23 / ATCC MYA-3075) (Metarhizium anisopliae (strain ARSEF 23)).